The chain runs to 260 residues: Carbonic anhydrase 2 (260 aa).

In terms of domain architecture, Alpha-carbonic anhydrase spans 3-259; the sequence is HHWGYDSHNG…LKSREVRASF (257 aa). Residue H64 is the Proton donor/acceptor of the active site. Positions 94, 96, and 119 each coordinate Zn(2+). Residue 198-199 participates in substrate binding; that stretch reads TT.

Belongs to the alpha-carbonic anhydrase family. Zn(2+) is required as a cofactor.

The protein localises to the cytoplasm. It localises to the cell membrane. It carries out the reaction hydrogencarbonate + H(+) = CO2 + H2O. It catalyses the reaction urea = cyanamide + H2O. With respect to regulation, inhibited by acetazolamide. Catalyzes the reversible hydration of carbon dioxide. Can also hydrate cyanamide to urea. This Gallus gallus (Chicken) protein is Carbonic anhydrase 2 (CA2).